The sequence spans 241 residues: Small ribosomal subunit protein uS3 (241 aa).

The KH type-2 domain maps to 39 to 108 (IREGVLKLLK…NLKVEVKVIE (70 aa)). Residues 215-241 (SQRVSEKAPMNNDRRFNNKNNNRGGRK) form a disordered region. A compositionally biased stretch (low complexity) spans 232-241 (NKNNNRGGRK).

The protein belongs to the universal ribosomal protein uS3 family. As to quaternary structure, part of the 30S ribosomal subunit. Forms a tight complex with proteins S10 and S14.

Binds the lower part of the 30S subunit head. Binds mRNA in the 70S ribosome, positioning it for translation. The sequence is that of Small ribosomal subunit protein uS3 from Mesoplasma florum (Acholeplasma florum).